Here is a 182-residue protein sequence, read N- to C-terminus: NADH-quinone oxidoreductase subunit I (182 aa).

2 4Fe-4S ferredoxin-type domains span residues 52-82 (LTRDPDGEERCVACNLCAVACPVGCISLQKA) and 92-121 (DFFRINFSRCIFCGLCEEACPTTAIQLTPD). Positions 62, 65, 68, 72, 101, 104, 107, and 111 each coordinate [4Fe-4S] cluster.

The protein belongs to the complex I 23 kDa subunit family. NDH-1 is composed of 13 different subunits. Subunits NuoA, H, J, K, L, M, N constitute the membrane sector of the complex. Requires [4Fe-4S] cluster as cofactor.

It is found in the cell inner membrane. The enzyme catalyses a quinone + NADH + 5 H(+)(in) = a quinol + NAD(+) + 4 H(+)(out). Its function is as follows. NDH-1 shuttles electrons from NADH, via FMN and iron-sulfur (Fe-S) centers, to quinones in the respiratory chain. The immediate electron acceptor for the enzyme in this species is believed to be ubiquinone. Couples the redox reaction to proton translocation (for every two electrons transferred, four hydrogen ions are translocated across the cytoplasmic membrane), and thus conserves the redox energy in a proton gradient. This chain is NADH-quinone oxidoreductase subunit I, found in Pseudomonas syringae pv. tomato (strain ATCC BAA-871 / DC3000).